The sequence spans 301 residues: Probable cyclic nucleotide phosphodiesterase RER_40650 (301 aa).

Positions 20, 22, 61, 95, 167, 205, and 207 each coordinate Fe cation. AMP is bound by residues His-22, Asp-61, and 95–96; that span reads NH. His-207 contributes to the AMP binding site.

Belongs to the cyclic nucleotide phosphodiesterase class-III family. Fe(2+) serves as cofactor.

The chain is Probable cyclic nucleotide phosphodiesterase RER_40650 from Rhodococcus erythropolis (strain PR4 / NBRC 100887).